A 92-amino-acid polypeptide reads, in one-letter code: UPF0728 protein C10orf53 homolog (92 aa).

Belongs to the UPF0728 family.

The chain is UPF0728 protein C10orf53 homolog from Danio rerio (Zebrafish).